A 234-amino-acid chain; its full sequence is CHD1 helical C-terminal domain containing protein 1 (234 aa).

The interval 1–38 (MEASDGQADEREEPLEQGTNARSLERRSSTTPAKDSLV) is disordered. The interval 44 to 145 (LDRDTFKICK…NNQTTKFLMA (102 aa)) is CHD1 helical C-terminal domain (CHCT). Residues 200–234 (LRARGPRRRGSKLPQEPKLKRRRIKEAPDTPETCL) are disordered.

It localises to the cytoplasm. The protein localises to the nucleus. May play a role in regulation of apoptosis. This is CHD1 helical C-terminal domain containing protein 1 (CHCT1) from Bos taurus (Bovine).